The chain runs to 736 residues: uncharacterized protein (736 aa).

2 consecutive ABC transporter domains span residues 183-459 (IKID…KQME) and 518-734 (LQMS…TMTI). Residues 215-222 (GRNGIGKS) and 551-558 (GPNGAGKS) each bind ATP.

This sequence belongs to the ABC transporter superfamily.

Its subcellular location is the cytoplasm. This is an uncharacterized protein from Schizosaccharomyces pombe (strain 972 / ATCC 24843) (Fission yeast).